Consider the following 141-residue polypeptide: Hemoglobin subunit alpha-D (141 aa).

One can recognise a Globin domain in the interval 1–141 (MLTAEDKKLI…VAAVLAEKYR (141 aa)). Residues His-58 and His-87 each coordinate heme b.

As to quaternary structure, heterotetramer of two alpha-D chains and two beta chains. As to expression, red blood cells.

Involved in oxygen transport from the lung to the various peripheral tissues. This is Hemoglobin subunit alpha-D (HBAD) from Aythya fuligula (Tufted duck).